Here is a 119-residue protein sequence, read N- to C-terminus: Ribonuclease P protein component (119 aa).

A disordered region spans residues 1–20 (MLPAQHRMTRSTEFGATVSK).

Belongs to the RnpA family. As to quaternary structure, consists of a catalytic RNA component (M1 or rnpB) and a protein subunit.

It catalyses the reaction Endonucleolytic cleavage of RNA, removing 5'-extranucleotides from tRNA precursor.. RNaseP catalyzes the removal of the 5'-leader sequence from pre-tRNA to produce the mature 5'-terminus. It can also cleave other RNA substrates such as 4.5S RNA. The protein component plays an auxiliary but essential role in vivo by binding to the 5'-leader sequence and broadening the substrate specificity of the ribozyme. In Mycolicibacterium vanbaalenii (strain DSM 7251 / JCM 13017 / BCRC 16820 / KCTC 9966 / NRRL B-24157 / PYR-1) (Mycobacterium vanbaalenii), this protein is Ribonuclease P protein component.